Reading from the N-terminus, the 74-residue chain is ATP synthase subunit c (74 aa).

A run of 2 helical transmembrane segments spans residues phenylalanine 8–isoleucine 28 and isoleucine 52–isoleucine 72.

Belongs to the ATPase C chain family. As to quaternary structure, F-type ATPases have 2 components, F(1) - the catalytic core - and F(0) - the membrane proton channel. F(1) has five subunits: alpha(3), beta(3), gamma(1), delta(1), epsilon(1). F(0) has three main subunits: a(1), b(2) and c(10-14). The alpha and beta chains form an alternating ring which encloses part of the gamma chain. F(1) is attached to F(0) by a central stalk formed by the gamma and epsilon chains, while a peripheral stalk is formed by the delta and b chains.

The protein localises to the cell inner membrane. Its function is as follows. F(1)F(0) ATP synthase produces ATP from ADP in the presence of a proton or sodium gradient. F-type ATPases consist of two structural domains, F(1) containing the extramembraneous catalytic core and F(0) containing the membrane proton channel, linked together by a central stalk and a peripheral stalk. During catalysis, ATP synthesis in the catalytic domain of F(1) is coupled via a rotary mechanism of the central stalk subunits to proton translocation. Functionally, key component of the F(0) channel; it plays a direct role in translocation across the membrane. A homomeric c-ring of between 10-14 subunits forms the central stalk rotor element with the F(1) delta and epsilon subunits. The protein is ATP synthase subunit c of Rickettsia canadensis (strain McKiel).